A 166-amino-acid polypeptide reads, in one-letter code: Ribosome maturation factor RimM (166 aa).

The region spanning 94–166 (GDEYYWRDLM…EMVVRLLPGL (73 aa)) is the PRC barrel domain.

The protein belongs to the RimM family. As to quaternary structure, binds ribosomal protein uS19.

It is found in the cytoplasm. Functionally, an accessory protein needed during the final step in the assembly of 30S ribosomal subunit, possibly for assembly of the head region. Essential for efficient processing of 16S rRNA. May be needed both before and after RbfA during the maturation of 16S rRNA. It has affinity for free ribosomal 30S subunits but not for 70S ribosomes. The protein is Ribosome maturation factor RimM of Syntrophus aciditrophicus (strain SB).